The primary structure comprises 427 residues: 3-phosphoshikimate 1-carboxyvinyltransferase (427 aa).

3-phosphoshikimate-binding residues include K22, S23, and R27. K22 serves as a coordination point for phosphoenolpyruvate. Positions 96 and 124 each coordinate phosphoenolpyruvate. Residues S169, S170, Q171, S197, D313, N336, and K340 each coordinate 3-phosphoshikimate. Q171 provides a ligand contact to phosphoenolpyruvate. D313 acts as the Proton acceptor in catalysis. Residues R344, R386, and K411 each coordinate phosphoenolpyruvate.

The protein belongs to the EPSP synthase family. Monomer.

Its subcellular location is the cytoplasm. The catalysed reaction is 3-phosphoshikimate + phosphoenolpyruvate = 5-O-(1-carboxyvinyl)-3-phosphoshikimate + phosphate. The protein operates within metabolic intermediate biosynthesis; chorismate biosynthesis; chorismate from D-erythrose 4-phosphate and phosphoenolpyruvate: step 6/7. Its function is as follows. Catalyzes the transfer of the enolpyruvyl moiety of phosphoenolpyruvate (PEP) to the 5-hydroxyl of shikimate-3-phosphate (S3P) to produce enolpyruvyl shikimate-3-phosphate and inorganic phosphate. This chain is 3-phosphoshikimate 1-carboxyvinyltransferase, found in Salmonella typhi.